We begin with the raw amino-acid sequence, 130 residues long: MTRTSVLADALNAINNAEKTGKRQVLIRPSSKVIIKFLQVMQKHGYIGEFEYIDDHRSGKIVVQLTGRLNKCGVISPRFNVKINDVEKWTANLLPARQFGYVILTTSAGIMDHEEAHRKHVAGKILGFVY.

This sequence belongs to the universal ribosomal protein uS8 family.

This Eremothecium gossypii (strain ATCC 10895 / CBS 109.51 / FGSC 9923 / NRRL Y-1056) (Yeast) protein is Small ribosomal subunit protein uS8 (RPS22A).